Reading from the N-terminus, the 65-residue chain is uncharacterized protein (65 aa).

A DNA-binding region (ompR/PhoB-type) is located at residues 1–65 (MIALSVCWQI…ETGIGYRFML (65 aa)).

This is an uncharacterized protein from Escherichia coli (strain K12).